Reading from the N-terminus, the 537-residue chain is Tegument protein BRRF2 (537 aa).

Disordered regions lie at residues 321–366, 378–398, 414–466, and 486–537; these read RPRF…AVPP, AKQN…ETSP, SKQH…DEEF, and GLRV…LSVV. Positions 334-347 are enriched in polar residues; the sequence is EPQQTCSQLTSRGN. Residues 423 to 441 are compositionally biased toward low complexity; the sequence is SSQAAPSFSSVAPVASLSG. The span at 492 to 517 shows a compositional bias: acidic residues; the sequence is DEDEDGSEDGEFSDLDLSDSDHEGDE.

It belongs to the lymphocryptovirus BRRF2 family.

Its subcellular location is the virion tegument. The polypeptide is Tegument protein BRRF2 (Homo sapiens (Human)).